A 418-amino-acid polypeptide reads, in one-letter code: Serine hydroxymethyltransferase (418 aa).

(6S)-5,6,7,8-tetrahydrofolate is bound by residues leucine 121 and 125–127 (GHL). Lysine 230 bears the N6-(pyridoxal phosphate)lysine mark. 356-358 (SPF) lines the (6S)-5,6,7,8-tetrahydrofolate pocket.

Belongs to the SHMT family. Homodimer. Pyridoxal 5'-phosphate serves as cofactor.

The protein resides in the cytoplasm. The enzyme catalyses (6R)-5,10-methylene-5,6,7,8-tetrahydrofolate + glycine + H2O = (6S)-5,6,7,8-tetrahydrofolate + L-serine. It functions in the pathway one-carbon metabolism; tetrahydrofolate interconversion. The protein operates within amino-acid biosynthesis; glycine biosynthesis; glycine from L-serine: step 1/1. Catalyzes the reversible interconversion of serine and glycine with tetrahydrofolate (THF) serving as the one-carbon carrier. This reaction serves as the major source of one-carbon groups required for the biosynthesis of purines, thymidylate, methionine, and other important biomolecules. Also exhibits THF-independent aldolase activity toward beta-hydroxyamino acids, producing glycine and aldehydes, via a retro-aldol mechanism. This is Serine hydroxymethyltransferase from Pseudoalteromonas translucida (strain TAC 125).